Here is a 342-residue protein sequence, read N- to C-terminus: Large ribosomal subunit protein uL10 (342 aa).

The tract at residues 212 to 342 (EYIDMLQKAY…ALAGLSALFG (131 aa)) is required for interaction with ribosomal protein L12 dimers. The span at 299–308 (QAQVAVATQP) shows a compositional bias: polar residues. Residues 299–342 (QAQVAVATQPSEEEKKEEEKTEEEEKEEEASEEEALAGLSALFG) form a disordered region. Over residues 318–333 (KTEEEEKEEEASEEEA) the composition is skewed to acidic residues.

The protein belongs to the universal ribosomal protein uL10 family. As to quaternary structure, part of the 50S ribosomal subunit, binds large rRNA. Forms the ribosomal stalk which helps the ribosome interact with GTP-bound translation factors. Forms a heptameric L10(L12)2(L12)2(L12)2 complex, where L10 forms an elongated spine to which the L12 dimers bind in a sequential fashion.

Functionally, forms the large subunit's ribosomal stalk, playing a central role in the interaction of the ribosome with elongation factors; the stalk complex of P.horikoshii binds to E.coli large subunits and confers on them the ability to interact with eukaryotic elongation factors. Each succesive L12 dimer bound along the P0 spine increases the GTPase activity of elongation factors and increases translation by reconsituted ribosomes, although the first site is the most stimulatory. In Pyrococcus horikoshii (strain ATCC 700860 / DSM 12428 / JCM 9974 / NBRC 100139 / OT-3), this protein is Large ribosomal subunit protein uL10.